A 101-amino-acid polypeptide reads, in one-letter code: Putative pterin-4-alpha-carbinolamine dehydratase (101 aa).

It belongs to the pterin-4-alpha-carbinolamine dehydratase family.

The enzyme catalyses (4aS,6R)-4a-hydroxy-L-erythro-5,6,7,8-tetrahydrobiopterin = (6R)-L-erythro-6,7-dihydrobiopterin + H2O. The protein is Putative pterin-4-alpha-carbinolamine dehydratase of Rhodopseudomonas palustris (strain BisB18).